The primary structure comprises 311 residues: Aquaporin Lacbi1:392091 (311 aa).

Over 1–16 (MHPQVASLFDNVYEDL) the chain is Cytoplasmic. Residues 17-37 (AAATLEFIGTAFFLLFGLGGI) traverse the membrane as a helical segment. Residues 38–56 (QASTAEDTASGQPPASGIE) are Extracellular-facing. Residues 57-77 (HVLYISTCMGLSLVVSAWLFF) form a helical membrane-spanning segment. Position 78 (Arg78) is a topological domain, cytoplasmic. A helical membrane pass occupies residues 79 to 99 (VTGGLFNPNISFALLLVGGLK). The NPA 1 motif lies at 85–87 (NPN). Pro100 is a topological domain (extracellular). Residues 101–121 (LRFVLFCIAQLTGAIAGAAIV) traverse the membrane as a helical segment. Topologically, residues 122–143 (RGLTSAPLSVNNVLQQGTSAAQ) are cytoplasmic. The helical transmembrane segment at 144–164 (GVFIEMFITAALVLSVLMLAA) threads the bilayer. Over 165-168 (EKHE) the chain is Extracellular. The helical transmembrane segment at 169-189 (ATPFAPVGIGLTLFACHLFAV) threads the bilayer. Topologically, residues 190 to 215 (YYTGAAMNSARAFGPAVISGFPEPQH) are cytoplasmic. The NPA 2 signature appears at 197–199 (NSA). Residues 216–236 (WVYWVGPFLGSLLGAGFYATL) form a helical membrane-spanning segment. The Extracellular segment spans residues 237 to 311 (KHYKYWHLNP…TSSRTNFSPV (75 aa)). A disordered region spans residues 276-311 (DEETRNGCASNEEGVRATGDEKSSNATSSRTNFSPV). Residues 288-298 (EGVRATGDEKS) are compositionally biased toward basic and acidic residues. A compositionally biased stretch (polar residues) spans 299-311 (SNATSSRTNFSPV). Residue Asn300 is glycosylated (N-linked (GlcNAc...) asparagine).

This sequence belongs to the MIP/aquaporin (TC 1.A.8) family.

The protein localises to the membrane. The enzyme catalyses H2O(in) = H2O(out). The catalysed reaction is NH4(+)(in) = NH4(+)(out). In terms of biological role, water channel required to facilitate the transport of water across membranes. Also enables low but statistically significant ammonium permeability. May be involved in fungal nitrogen (ammonium) support of the plant host in symbiosis. This is Aquaporin Lacbi1:392091 from Laccaria bicolor (strain S238N-H82 / ATCC MYA-4686) (Bicoloured deceiver).